The following is an 898-amino-acid chain: Interleukin enhancer-binding factor 3-B (898 aa).

Positions 5–379 (RIFLNDDRHV…ALKRPIEEDG (375 aa)) constitute a DZF domain. 5 disordered regions span residues 52-87 (QEKD…NPTR), 374-403 (PIEE…PPQA), 468-529 (LPTG…VMEL), 627-651 (PPPQ…RGGF), and 711-799 (GEGY…QGAA). Over residues 61-71 (ENPEPEETETT) the composition is skewed to acidic residues. 2 stretches are compositionally biased toward basic and acidic residues: residues 72 to 81 (EEGKDSEAKT) and 374 to 384 (PIEEDGEDKSP). The Bipartite nuclear localization signal motif lies at 372–390 (KRPIEEDGEDKSPSKKKKK). Residues 399–468 (EPPQAMNALM…AVKVLQDMGL (70 aa)) enclose the DRBM 1 domain. Residues 474–483 (EKEESVDESE) are compositionally biased toward acidic residues. Positions 489-513 (QTPSQTADSEQADSSAGDQSESGKQ) are enriched in polar residues. The 67-residue stretch at 521-587 (HGKNPVMELN…ALSALEKLFP (67 aa)) folds into the DRBM 2 domain. Over residues 637-651 (RGGMNRGRGRGRGGF) the composition is skewed to gly residues. Residues 717-747 (PTPPKPFVKKPPPPQQQQQPPPQHASNPPKP) show a composition bias toward pro residues. A compositionally biased stretch (low complexity) spans 749–782 (YNQGYQGHQGGQQQQQPQQQQQQTYNQNQYSNYG).

As to quaternary structure, a component of a ybx2/frgy2-containing mRNA-ribonucleoprotein (mRNP) complex. Also a component of the CCAAT box transcription factor (CBTF) complex. In terms of processing, phosphorylated. Phosphorylation affects nuclear translocation. Post-translationally, methylated by protein arginine N-methyltransferase 1 (prmt1b) in the RGG-rich domain. Methylation decreases DNA-binding and thereby decreases transcription of the gata2 gene, but does not regulate dsRNA binding or subcellular localization.

Its subcellular location is the nucleus. It is found in the cytoplasm. Functionally, RNA-binding protein that plays an essential role in the biogenesis of circular RNAs (circRNAs) which are produced by back-splicing circularization of pre-mRNAs. Within the nucleus, promotes circRNAs processing by stabilizing the regulatory elements residing in the flanking introns of the circularized exons. Plays thereby a role in the back-splicing of a subset of circRNAs. As a consequence, participates in a wide range of transcriptional and post-transcriptional processes. Binds to poly-U elements and AU-rich elements (AREs) in the 3'-UTR of target mRNAs. Upon viral infection, ILF3 accumulates in the cytoplasm and participates in the innate antiviral response. Mechanistically, ILF3 becomes phosphorylated and activated by the double-stranded RNA-activated protein kinase/PKR which releases ILF3 from cellular mature circRNAs. In turn, unbound ILF3 molecules are able to interact with and thus inhibit viral mRNAs. Has a cytoplasmic role early in development as part of a ribonucleoprotein (mRNP) complex which may regulate mRNA transport and/or translation. Following nuclear localization at the mid-blastula transition, acts as a transcription factor and binds the 5'-CCAAT-3' promoter sequence to regulate transcription of the gata2 gene as a subunit of the CCAAT box transcription factor (CBTF). Its role as an mRNP component negatively regulates its activity as a transcription factor by precluding its nuclear localization. In Xenopus laevis (African clawed frog), this protein is Interleukin enhancer-binding factor 3-B (ilf3-b).